A 381-amino-acid chain; its full sequence is Homoserine O-succinyltransferase (381 aa).

An AB hydrolase-1 domain is found at 45–360 (NAVLVCHALN…PHGHDAFLLD (316 aa)). The Nucleophile role is filled by serine 151. Arginine 221 lines the substrate pocket. Residues aspartate 321 and histidine 354 contribute to the active site. Residue aspartate 355 coordinates substrate.

This sequence belongs to the AB hydrolase superfamily. MetX family. As to quaternary structure, homodimer.

The protein resides in the cytoplasm. It carries out the reaction L-homoserine + succinyl-CoA = O-succinyl-L-homoserine + CoA. The protein operates within amino-acid biosynthesis; L-methionine biosynthesis via de novo pathway; O-succinyl-L-homoserine from L-homoserine: step 1/1. In terms of biological role, transfers a succinyl group from succinyl-CoA to L-homoserine, forming succinyl-L-homoserine. In Burkholderia pseudomallei (strain 1710b), this protein is Homoserine O-succinyltransferase.